The following is a 507-amino-acid chain: Prolyl carboxy peptidase like protein 5 (507 aa).

Positions 1 to 16 (MNIFISLAILIATTHC) are cleaved as a signal peptide. Residue N125 is glycosylated (N-linked (GlcNAc...) asparagine). S172 acts as the Charge relay system in catalysis. N-linked (GlcNAc...) asparagine glycans are attached at residues N332 and N407. Catalysis depends on charge relay system residues D439 and H466.

Belongs to the peptidase S28 family.

This is Prolyl carboxy peptidase like protein 5 from Caenorhabditis elegans.